Consider the following 346-residue polypeptide: UDP-N-acetylenolpyruvoylglucosamine reductase (346 aa).

Positions 17 to 187 constitute an FAD-binding PCMH-type domain; that stretch reads IESQAYALIE…VAVGFTLKKE (171 aa). Arg163 is an active-site residue. The active-site Proton donor is the Ser233. The active site involves Glu329.

Belongs to the MurB family. The cofactor is FAD.

Its subcellular location is the cytoplasm. It carries out the reaction UDP-N-acetyl-alpha-D-muramate + NADP(+) = UDP-N-acetyl-3-O-(1-carboxyvinyl)-alpha-D-glucosamine + NADPH + H(+). It functions in the pathway cell wall biogenesis; peptidoglycan biosynthesis. In terms of biological role, cell wall formation. This is UDP-N-acetylenolpyruvoylglucosamine reductase from Photobacterium profundum (strain SS9).